The following is an 84-amino-acid chain: Putative UPF0320 protein YAL068W-A (84 aa).

It belongs to the UPF0320 family.

The chain is Putative UPF0320 protein YAL068W-A from Saccharomyces cerevisiae (strain ATCC 204508 / S288c) (Baker's yeast).